Reading from the N-terminus, the 794-residue chain is EVI5-like protein (794 aa).

Over residues 1 to 30 (MASPTLSPDSSSQEALSAPTCSPTSDSENL) the composition is skewed to polar residues. Disordered regions lie at residues 1–36 (MASP…DELE) and 49–75 (EADS…SSSA). Over residues 55–75 (MRSMNGSRRNSGSSLVSSSSA) the composition is skewed to low complexity. The Rab-GAP TBC domain occupies 115 to 300 (GIPHHFRAIV…RVFDIFMYEG (186 aa)). Coiled coils occupy residues 358-449 (KKMK…QQEN) and 569-709 (EAQA…LKGP). Position 685 is a phosphoserine (Ser-685). The tract at residues 766–794 (LERPAKDSEGSSDSDADELAAPYSQGLDN) is disordered.

May interact with RAB10.

In terms of biological role, functions as a GTPase-activating protein (GAP) with a broad specificity. In Homo sapiens (Human), this protein is EVI5-like protein (EVI5L).